Consider the following 270-residue polypeptide: MTLKIAIAGAGGRMGRQLIQAVHSAEGVELGAAFERKGSSLVGTDAGELAGIGHLGVAVSDDLESQKDKFDLLIDFTRPEGSLEHIAFCVANNKKMVIGTTGFDQNGKAAIKAASDKIAIVFASNFSVGVNLVFKLLEKAAKVMGDYCDIEVIEAHHRHKVDAPSGTALSMGEHIAKTLGRDLKTHGVFCREGITGERKRDEIGFSTIRASDVVGEHMVWFADIGERVEISHKASSRMTFANGAVRAGKWLENKANGLFDMTDVLDLNNL.

NAD(+)-binding positions include 9–14 (GAGGRM) and Glu35. Arg36 serves as a coordination point for NADP(+). Residues 99–101 (GTT) and 123–126 (ASNF) each bind NAD(+). The Proton donor/acceptor role is filled by His156. His157 lines the (S)-2,3,4,5-tetrahydrodipicolinate pocket. The Proton donor role is filled by Lys160. 166-167 (GT) contacts (S)-2,3,4,5-tetrahydrodipicolinate.

It belongs to the DapB family.

The protein resides in the cytoplasm. The enzyme catalyses (S)-2,3,4,5-tetrahydrodipicolinate + NAD(+) + H2O = (2S,4S)-4-hydroxy-2,3,4,5-tetrahydrodipicolinate + NADH + H(+). It carries out the reaction (S)-2,3,4,5-tetrahydrodipicolinate + NADP(+) + H2O = (2S,4S)-4-hydroxy-2,3,4,5-tetrahydrodipicolinate + NADPH + H(+). The protein operates within amino-acid biosynthesis; L-lysine biosynthesis via DAP pathway; (S)-tetrahydrodipicolinate from L-aspartate: step 4/4. Its function is as follows. Catalyzes the conversion of 4-hydroxy-tetrahydrodipicolinate (HTPA) to tetrahydrodipicolinate. This chain is 4-hydroxy-tetrahydrodipicolinate reductase, found in Haemophilus influenzae (strain PittEE).